Consider the following 481-residue polypeptide: CUGBP Elav-like family member 6 (481 aa).

Low complexity predominate over residues 1-12 (MAAAPGGSAQPA). The disordered stretch occupies residues 1 to 34 (MAAAPGGSAQPAGPGPRLGFSTADSGVGMSGLNP). RRM domains are found at residues 46–127 (IKLF…PAAS), 134–214 (RKLF…LADT), and 396–474 (CNLF…LKRP).

The protein belongs to the CELF/BRUNOL family. As to expression, expressed mainly in kidney, brain and testis and present in other tissues albeit at lower levels. Also expressed in fetal kidney.

The protein resides in the nucleus. Its subcellular location is the cytoplasm. In terms of biological role, RNA-binding protein implicated in the regulation of pre-mRNA alternative splicing. Mediates exon inclusion and/or exclusion in pre-mRNA that are subject to tissue-specific and developmentally regulated alternative splicing. Specifically activates exon 5 inclusion of TNNT2 in a muscle-specific splicing enhancer (MSE)-dependent manner. Promotes also exon exclusion of INSR pre-mRNA. In Homo sapiens (Human), this protein is CUGBP Elav-like family member 6 (CELF6).